A 176-amino-acid chain; its full sequence is ATP-dependent protease subunit HslV (176 aa).

The active site involves threonine 2. Na(+) contacts are provided by glycine 157, cysteine 160, and threonine 163.

It belongs to the peptidase T1B family. HslV subfamily. As to quaternary structure, a double ring-shaped homohexamer of HslV is capped on each side by a ring-shaped HslU homohexamer. The assembly of the HslU/HslV complex is dependent on binding of ATP.

Its subcellular location is the cytoplasm. It catalyses the reaction ATP-dependent cleavage of peptide bonds with broad specificity.. Its activity is regulated as follows. Allosterically activated by HslU binding. Its function is as follows. Protease subunit of a proteasome-like degradation complex believed to be a general protein degrading machinery. This Pseudomonas fluorescens (strain ATCC BAA-477 / NRRL B-23932 / Pf-5) protein is ATP-dependent protease subunit HslV.